Reading from the N-terminus, the 131-residue chain is uncharacterized protein (131 aa).

Residues 1 to 67 form a disordered region; it reads MCSARKLLRG…HSGEPIGDDY (67 aa). Position 14 is a phosphoserine (Ser-14). The helical transmembrane segment at 99 to 119 threads the bilayer; the sequence is VVVLFFWLMLWFLGLQALGLV.

It belongs to the FAM241 family.

The protein localises to the membrane. This is an uncharacterized protein from Mus musculus (Mouse).